Reading from the N-terminus, the 89-residue chain is LYR motif-containing protein 4 (89 aa).

It belongs to the complex I LYR family.

It is found in the mitochondrion. Its subcellular location is the nucleus. It functions in the pathway cofactor biosynthesis; iron-sulfur cluster biosynthesis. Required for nuclear and mitochondrial iron-sulfur protein biosynthesis. The sequence is that of LYR motif-containing protein 4 (lyrm4) from Danio rerio (Zebrafish).